A 173-amino-acid polypeptide reads, in one-letter code: RNA pyrophosphohydrolase (173 aa).

Positions 6–149 (GFRANVGIIL…KRGVYRRALQ (144 aa)) constitute a Nudix hydrolase domain. The Nudix box motif lies at 38–59 (GGIDRGETPMDAMYRELWEEVG).

The protein belongs to the Nudix hydrolase family. RppH subfamily. A divalent metal cation is required as a cofactor.

Its function is as follows. Accelerates the degradation of transcripts by removing pyrophosphate from the 5'-end of triphosphorylated RNA, leading to a more labile monophosphorylated state that can stimulate subsequent ribonuclease cleavage. The sequence is that of RNA pyrophosphohydrolase from Psychrobacter arcticus (strain DSM 17307 / VKM B-2377 / 273-4).